A 473-amino-acid polypeptide reads, in one-letter code: Kremen protein 1 (473 aa).

A signal peptide spans 1 to 19 (MAPPAARLALLSAAALTLA). Topologically, residues 21-392 (RPAPGPRSGP…ANSHRVEGWT (372 aa)) are extracellular. Residues 31 to 114 (ECFTANGADY…YWKYCEIPAC (84 aa)) form the Kringle domain. Cystine bridges form between cysteine 32–cysteine 114, cysteine 55–cysteine 95, cysteine 84–cysteine 109, cysteine 122–cysteine 186, cysteine 147–cysteine 167, cysteine 151–cysteine 169, cysteine 190–cysteine 198, and cysteine 214–cysteine 240. Residue asparagine 59 is glycosylated (N-linked (GlcNAc...) asparagine). The region spanning 116–210 (MPGNLGCYKD…DGRIILFDTL (95 aa)) is the WSC domain. One can recognise a CUB domain in the interval 214–321 (CGGNYSAMAA…QGFAVLYQAT (108 aa)). N-linked (GlcNAc...) asparagine glycans are attached at residues asparagine 217, asparagine 255, asparagine 293, asparagine 333, and asparagine 345. A helical transmembrane segment spans residues 393–413 (VYGLATLLILTVTAVVAKILL). Over 414 to 473 (HVTFKSHRVPASGDLRDCRQPGASGDIWTIFYEPSTTISIFKKKLKGQSQQDDRNPLVSD) the chain is Cytoplasmic. Positions 414-473 (HVTFKSHRVPASGDLRDCRQPGASGDIWTIFYEPSTTISIFKKKLKGQSQQDDRNPLVSD) are essential for apoptotic activity.

Forms a ternary complex with DKK1 and LRP6. Interacts with LRP6 in a DKK1-dependent manner. Interacts with DKK1 and RSPO1 (via FU repeats). In terms of tissue distribution, in the adult, widely expressed with high levels in heart, lung, kidney, skeletal muscle and testis.

Its subcellular location is the cell membrane. Its function is as follows. Receptor for Dickkopf proteins. Cooperates with DKK1/2 to inhibit Wnt/beta-catenin signaling by promoting the endocytosis of Wnt receptors LRP5 and LRP6. In the absence of DKK1, potentiates Wnt-beta-catenin signaling by maintaining LRP5 or LRP6 at the cell membrane. Can trigger apoptosis in a Wnt-independent manner and this apoptotic activity is inhibited upon binding of the ligand DKK1. Plays a role in limb development; attenuates Wnt signaling in the developing limb to allow normal limb patterning and can also negatively regulate bone formation. Modulates cell fate decisions in the developing cochlea with an inhibitory role in hair cell fate specification. This is Kremen protein 1 (Kremen1) from Mus musculus (Mouse).